A 437-amino-acid polypeptide reads, in one-letter code: Putrescine hydroxycinnamoyltransferase 3 (437 aa).

Residues histidine 151 and aspartate 383 each act as proton acceptor in the active site.

This sequence belongs to the plant acyltransferase family. Highly expressed in roots. Expressed at low levels in shoots and flowers.

Its function is as follows. Hydroxycinnamoyl transferase that catalyzes the transfer of an acyl from p-coumaryol-CoA to putrescine, to produce coumaroyl putrescine. Can use feruloyl-CoA and caffeoyl-CoA as acyl donors. This is Putrescine hydroxycinnamoyltransferase 3 from Oryza sativa subsp. japonica (Rice).